The chain runs to 391 residues: 3-ketoacyl-CoA thiolase (391 aa).

C90 functions as the Acyl-thioester intermediate in the catalytic mechanism. Catalysis depends on proton acceptor residues H347 and C377.

It belongs to the thiolase-like superfamily. Thiolase family.

It catalyses the reaction an acyl-CoA + acetyl-CoA = a 3-oxoacyl-CoA + CoA. Its pathway is lipid metabolism; fatty acid beta-oxidation. Its function is as follows. Involved in the degradation of long-chain fatty acids. The protein is 3-ketoacyl-CoA thiolase (fadA) of Bacillus subtilis (strain 168).